Consider the following 197-residue polypeptide: Elongation factor Ts (197 aa).

Residues 81–84 (TDFV) form an involved in Mg(2+) ion dislocation from EF-Tu region.

Belongs to the EF-Ts family.

The protein resides in the cytoplasm. Functionally, associates with the EF-Tu.GDP complex and induces the exchange of GDP to GTP. It remains bound to the aminoacyl-tRNA.EF-Tu.GTP complex up to the GTP hydrolysis stage on the ribosome. This chain is Elongation factor Ts, found in Coprothermobacter proteolyticus (strain ATCC 35245 / DSM 5265 / OCM 4 / BT).